Here is a 349-residue protein sequence, read N- to C-terminus: Phenylalanine--tRNA ligase alpha subunit (349 aa).

Glu-258 provides a ligand contact to Mg(2+).

It belongs to the class-II aminoacyl-tRNA synthetase family. Phe-tRNA synthetase alpha subunit type 1 subfamily. Tetramer of two alpha and two beta subunits. Mg(2+) serves as cofactor.

The protein resides in the cytoplasm. The enzyme catalyses tRNA(Phe) + L-phenylalanine + ATP = L-phenylalanyl-tRNA(Phe) + AMP + diphosphate + H(+). In Rickettsia felis (strain ATCC VR-1525 / URRWXCal2) (Rickettsia azadi), this protein is Phenylalanine--tRNA ligase alpha subunit.